A 145-amino-acid chain; its full sequence is Ribonuclease H (145 aa).

Residues 1 to 142 form the RNase H type-1 domain; that stretch reads MKEVVIYTDG…CDEIARSMIK (142 aa). Residues D9, E47, D69, and D134 each coordinate Mg(2+).

Belongs to the RNase H family. Monomer. It depends on Mg(2+) as a cofactor.

The protein resides in the cytoplasm. It carries out the reaction Endonucleolytic cleavage to 5'-phosphomonoester.. Endonuclease that specifically degrades the RNA of RNA-DNA hybrids. This Caldicellulosiruptor saccharolyticus (strain ATCC 43494 / DSM 8903 / Tp8T 6331) protein is Ribonuclease H.